The following is a 328-amino-acid chain: Malate dehydrogenase (328 aa).

11–17 lines the NAD(+) pocket; the sequence is GAAGQIG. Residues R92 and R98 each contribute to the substrate site. NAD(+) is bound by residues N105, Q112, and 129–131; that span reads VGN. Positions 131 and 162 each coordinate substrate. The active-site Proton acceptor is H187.

This sequence belongs to the LDH/MDH superfamily. MDH type 2 family.

The catalysed reaction is (S)-malate + NAD(+) = oxaloacetate + NADH + H(+). In terms of biological role, catalyzes the reversible oxidation of malate to oxaloacetate. This is Malate dehydrogenase from Coxiella burnetii (strain RSA 493 / Nine Mile phase I).